The chain runs to 512 residues: Spermatocyte protein spe-8 (512 aa).

The tract at residues 1–85 is disordered; sequence MRSKSSEGDL…PKPSSDNNNS (85 aa). Basic and acidic residues predominate over residues 15-41; the sequence is TQSREDKETTATYSEDTKPETQKERNA. Residues 68–78 show a composition bias toward pro residues; that stretch reads EAPPPPPPPKP. Positions 114–205 constitute an SH2 domain; that stretch reads FYHGFMGRNE…YEGMTLICGL (92 aa). Residues 217-485 form the Protein kinase domain; it reads VTLNKKLGEG…KEEVGFHEIE (269 aa). Residues 223–231 and Lys250 contribute to the ATP site; that span reads LGEGQFGEV. The active-site Proton acceptor is the Asp344.

The protein belongs to the protein kinase superfamily. Tyr protein kinase family. Fes/fps subfamily. As to expression, expression is restricted to male germline.

It localises to the cell membrane. The protein localises to the cytoplasm. It carries out the reaction L-tyrosyl-[protein] + ATP = O-phospho-L-tyrosyl-[protein] + ADP + H(+). Functionally, probable non-receptor tyrosine-protein kinase which plays a role in spermatid activation (spermiogenesis) in hermaphrodites. The chain is Spermatocyte protein spe-8 from Caenorhabditis elegans.